The sequence spans 140 residues: Large ribosomal subunit protein uL11 (140 aa).

This sequence belongs to the universal ribosomal protein uL11 family. As to quaternary structure, part of the ribosomal stalk of the 50S ribosomal subunit. Interacts with L10 and the large rRNA to form the base of the stalk. L10 forms an elongated spine to which L12 dimers bind in a sequential fashion forming a multimeric L10(L12)X complex. In terms of processing, one or more lysine residues are methylated.

Forms part of the ribosomal stalk which helps the ribosome interact with GTP-bound translation factors. The polypeptide is Large ribosomal subunit protein uL11 (Caldanaerobacter subterraneus subsp. tengcongensis (strain DSM 15242 / JCM 11007 / NBRC 100824 / MB4) (Thermoanaerobacter tengcongensis)).